A 168-amino-acid polypeptide reads, in one-letter code: MKLTSKGRYAVTAMLDVALHSQKSPVPLADISERQGISLSYLEQLFSKLRKAGLVASVRGPGGGYRLGADAFTISIGTVIAAVDESVDATKCQGKGDCQGGTRCLTHTLWRDLSSRITDFLNNITLGELMSDNEVIEISDRQDIDLAVNHGLANKTINTAPIGVNFRS.

One can recognise an HTH rrf2-type domain in the interval 2–131 (KLTSKGRYAV…NNITLGELMS (130 aa)). The segment at residues 28–51 (LADISERQGISLSYLEQLFSKLRK) is a DNA-binding region (H-T-H motif). Residues Cys92, Cys98, and Cys104 each coordinate [2Fe-2S] cluster.

Requires [2Fe-2S] cluster as cofactor.

Functionally, regulates the transcription of several operons and genes involved in the biogenesis of Fe-S clusters and Fe-S-containing proteins. This is HTH-type transcriptional regulator IscR from Vibrio vulnificus (strain CMCP6).